Reading from the N-terminus, the 685-residue chain is Methionine--tRNA ligase (685 aa).

Cys-142, Cys-145, Cys-155, and Cys-158 together coordinate Zn(2+). Residues 330-334 (KMSKS) carry the 'KMSKS' region motif. Lys-333 serves as a coordination point for ATP. The region spanning 584–685 (DFIKVDLRVA…SGAKPGDKVS (102 aa)) is the tRNA-binding domain.

This sequence belongs to the class-I aminoacyl-tRNA synthetase family. MetG type 1 subfamily. Homodimer. Zn(2+) is required as a cofactor.

It is found in the cytoplasm. It carries out the reaction tRNA(Met) + L-methionine + ATP = L-methionyl-tRNA(Met) + AMP + diphosphate. Its function is as follows. Is required not only for elongation of protein synthesis but also for the initiation of all mRNA translation through initiator tRNA(fMet) aminoacylation. This is Methionine--tRNA ligase from Acinetobacter baylyi (strain ATCC 33305 / BD413 / ADP1).